The following is a 360-amino-acid chain: Phospho-N-acetylmuramoyl-pentapeptide-transferase (360 aa).

10 helical membrane-spanning segments follow: residues 21 to 41 (YITF…LWIG), 73 to 93 (TMGG…WADL), 98 to 118 (VWFV…DDYW), 132 to 152 (WKYF…YAVG), 168 to 188 (FMPQ…VGTS), 199 to 219 (GLAI…AWAT), 236 to 256 (AGEL…FLWY), 263 to 283 (VFMG…IAVL), 288 to 308 (LLLV…ILQV), and 338 to 358 (VIVC…VTLK).

It belongs to the glycosyltransferase 4 family. MraY subfamily. Mg(2+) serves as cofactor.

It is found in the cell inner membrane. It carries out the reaction UDP-N-acetyl-alpha-D-muramoyl-L-alanyl-gamma-D-glutamyl-meso-2,6-diaminopimeloyl-D-alanyl-D-alanine + di-trans,octa-cis-undecaprenyl phosphate = di-trans,octa-cis-undecaprenyl diphospho-N-acetyl-alpha-D-muramoyl-L-alanyl-D-glutamyl-meso-2,6-diaminopimeloyl-D-alanyl-D-alanine + UMP. The protein operates within cell wall biogenesis; peptidoglycan biosynthesis. Its function is as follows. Catalyzes the initial step of the lipid cycle reactions in the biosynthesis of the cell wall peptidoglycan: transfers peptidoglycan precursor phospho-MurNAc-pentapeptide from UDP-MurNAc-pentapeptide onto the lipid carrier undecaprenyl phosphate, yielding undecaprenyl-pyrophosphoryl-MurNAc-pentapeptide, known as lipid I. The sequence is that of Phospho-N-acetylmuramoyl-pentapeptide-transferase from Actinobacillus pleuropneumoniae serotype 7 (strain AP76).